A 371-amino-acid polypeptide reads, in one-letter code: Putative phosphoserine aminotransferase (371 aa).

Position 45 (arginine 45) interacts with L-glutamate. Positions 103, 149, 171, and 194 each coordinate pyridoxal 5'-phosphate. Lysine 195 carries the post-translational modification N6-(pyridoxal phosphate)lysine. Position 246-247 (246-247 (NT)) interacts with pyridoxal 5'-phosphate.

This sequence belongs to the class-V pyridoxal-phosphate-dependent aminotransferase family. SerC subfamily. As to quaternary structure, homodimer. The cofactor is pyridoxal 5'-phosphate.

It is found in the cytoplasm. The enzyme catalyses O-phospho-L-serine + 2-oxoglutarate = 3-phosphooxypyruvate + L-glutamate. It catalyses the reaction 4-(phosphooxy)-L-threonine + 2-oxoglutarate = (R)-3-hydroxy-2-oxo-4-phosphooxybutanoate + L-glutamate. Its pathway is amino-acid biosynthesis; L-serine biosynthesis; L-serine from 3-phospho-D-glycerate: step 2/3. It participates in cofactor biosynthesis; pyridoxine 5'-phosphate biosynthesis; pyridoxine 5'-phosphate from D-erythrose 4-phosphate: step 3/5. In terms of biological role, catalyzes the reversible conversion of 3-phosphohydroxypyruvate to phosphoserine and of 3-hydroxy-2-oxo-4-phosphonooxybutanoate to phosphohydroxythreonine. The sequence is that of Putative phosphoserine aminotransferase from Mycolicibacterium vanbaalenii (strain DSM 7251 / JCM 13017 / BCRC 16820 / KCTC 9966 / NRRL B-24157 / PYR-1) (Mycobacterium vanbaalenii).